Here is a 344-residue protein sequence, read N- to C-terminus: Nuclear distribution protein nudE homolog 1 (344 aa).

A self-association region spans residues 1–93 (MEDSGKTFES…MQHSEGYRQI (93 aa)). The stretch at 18–188 (WRDLAMTYKQ…ELAVQQKQDK (171 aa)) forms a coiled coil. Residues 88 to 156 (EGYRQISALE…ERNAFLESEL (69 aa)) are interaction with PAFAH1B1. Positions 167 to 290 (QRLKDEARDL…QSPSRTSGPA (124 aa)) are interaction with CENPF. Positions 181–246 (AVQQKQDKPR…DSSTSGTPLT (66 aa)) are disordered. Serine 211 carries the post-translational modification Phosphoserine. Phosphothreonine is present on residues threonine 215 and threonine 228. Serine 239 is subject to Phosphoserine. Threonine 243 and threonine 246 each carry phosphothreonine. Residue cysteine 274 is the site of S-palmitoyl cysteine; by ZDHHC2, ZDHHC3 and ZDHHC7 attachment. The segment covering 279–289 (YDQSPSRTSGP) has biased composition (polar residues). Residues 279–337 (YDQSPSRTSGPASGRGTKNRDGVDRRPGSTSVGDKGSGKRLEFGKPASEPASPALPSAQ) are disordered. Serine 282 bears the Phosphoserine mark. Residues 296-305 (KNRDGVDRRP) are compositionally biased toward basic and acidic residues. The residue at position 309 (serine 309) is a Phosphoserine. Positions 324–336 (PASEPASPALPSA) are enriched in low complexity.

It belongs to the nudE family. Homodimer. Interacts with dynactin and PCM1. Interacts with CENPF, LIS1, CNTRL, dynein, tubulin gamma, PAFAH1B1, PCNT, SLMAP and TCP1. Interacts with ZNF365. Interacts with RAB9A; the interaction leads to RAB9A-dynein motor tethering. Interacts (via C-terminus) with MCRS1 (via C-terminus); phosphorylation of NDE1 inhibits the interaction. Phosphorylated in mitosis. Phosphorylation at Thr-246 is essential for the G2/M transition. In terms of tissue distribution, highly expressed in ovary. Also expressed in brain, heart, kidney, large intestine, liver, lung, small intestine and testis.

It is found in the cytoplasm. Its subcellular location is the cytoskeleton. The protein resides in the microtubule organizing center. The protein localises to the centrosome. It localises to the spindle. It is found in the chromosome. Its subcellular location is the centromere. The protein resides in the kinetochore. The protein localises to the cleavage furrow. It localises to the cytoplasmic vesicle membrane. Its function is as follows. Required for centrosome duplication and formation and function of the mitotic spindle. Essential for the development of the cerebral cortex. May regulate the production of neurons by controlling the orientation of the mitotic spindle during division of cortical neuronal progenitors of the proliferative ventricular zone of the brain. Orientation of the division plane perpendicular to the layers of the cortex gives rise to two proliferative neuronal progenitors whereas parallel orientation of the division plane yields one proliferative neuronal progenitor and a postmitotic neuron. A premature shift towards a neuronal fate within the progenitor population may result in an overall reduction in the final number of neurons and an increase in the number of neurons in the deeper layers of the cortex. Acts as a RAB9A/B effector that tethers RAB9-associated late endosomes to the dynein motor for their retrograde transport to the trans-Golgi network. The chain is Nuclear distribution protein nudE homolog 1 from Mus musculus (Mouse).